Consider the following 186-residue polypeptide: Adenylate kinase (186 aa).

An ATP-binding site is contributed by 12–17 (GAGKGT). The segment at 32-61 (STGDLLRAEVNAQSPLGKEAALIMNKGELV) is NMP. Residues Thr-33, Arg-38, 59–61 (ELV), 86–89 (GFPR), and Gln-93 each bind AMP. Residues 127-133 (SRGRSDD) are LID. Arg-128 contributes to the ATP binding site. AMP contacts are provided by Arg-130 and Arg-141. Gly-169 is an ATP binding site.

This sequence belongs to the adenylate kinase family. As to quaternary structure, monomer.

Its subcellular location is the cytoplasm. It catalyses the reaction AMP + ATP = 2 ADP. Its pathway is purine metabolism; AMP biosynthesis via salvage pathway; AMP from ADP: step 1/1. Its function is as follows. Catalyzes the reversible transfer of the terminal phosphate group between ATP and AMP. Plays an important role in cellular energy homeostasis and in adenine nucleotide metabolism. This is Adenylate kinase from Prochlorococcus marinus (strain MIT 9211).